Reading from the N-terminus, the 298-residue chain is 4-diphosphocytidyl-2-C-methyl-D-erythritol kinase (298 aa).

Residue K15 is part of the active site. 102 to 112 is a binding site for ATP; sequence PVAAGIGGGSS. D142 is a catalytic residue.

Belongs to the GHMP kinase family. IspE subfamily.

The enzyme catalyses 4-CDP-2-C-methyl-D-erythritol + ATP = 4-CDP-2-C-methyl-D-erythritol 2-phosphate + ADP + H(+). The protein operates within isoprenoid biosynthesis; isopentenyl diphosphate biosynthesis via DXP pathway; isopentenyl diphosphate from 1-deoxy-D-xylulose 5-phosphate: step 3/6. In terms of biological role, catalyzes the phosphorylation of the position 2 hydroxy group of 4-diphosphocytidyl-2C-methyl-D-erythritol. This is 4-diphosphocytidyl-2-C-methyl-D-erythritol kinase from Hyphomonas neptunium (strain ATCC 15444).